Consider the following 489-residue polypeptide: Cytochrome P450 monooxygenase trt6 (489 aa).

Residues 10–30 traverse the membrane as a helical segment; that stretch reads SLWSFGLWILVILSPVLFFAS. 2 N-linked (GlcNAc...) asparagine glycosylation sites follow: Asn364 and Asn407. Position 430 (Cys430) interacts with heme.

This sequence belongs to the cytochrome P450 family. The cofactor is heme.

Its subcellular location is the membrane. It functions in the pathway secondary metabolite biosynthesis; terpenoid biosynthesis. Functionally, cytochrome P450 monooxygenase; part of the gene cluster that mediates the biosynthesis of terretonin, a fungal meroterpenoid that acts as a mycotoxin. The first step of the pathway is the synthesis of 3,5-dimethylorsellinic acid (DMOA) by the polyketide synthase trt4. DMOA is then prenylated into farnesyl-DMOA by the polyprenyl transferase trt2. Methylation by the methyltransferase trt5 then leads to farnesyl-DMOA methyl ester which is further subject to epoxidation by the FAD-dependent monooxygenase trt8 to yield epoxyfarnesyl-DMOA methyl ester. Cyclization of epoxyfarnesyl-DMOA methyl ester by the terpene cyclase trt1 leads to a tetracycle intermediate which is in turn converted to preterretonin. Dehydrogenase trt9 comes next to transform preterretonin to preterrenoid. The FAD-dependent monooxygenase trt3 is then required for the C-hydroxylation at C16 of preterrenoid to yield terrenoid. The cytochrome P450 trt6 catalyzes three successive oxidations to transform terrenoid into an unstable intermediate, which then undergoes the D-ring expansion and unusual rearrangement of the methoxy group to afford the core skeleton of terretonin. Trt14 catalyzes the D-ring expansion of terretonin involving intramolecular methoxy rearrangement as well as the hydrolysis of the expanded D-ring and the methyl ester moiety. Finally, the nonheme iron-dependent dioxygenase trt7 accomplishes the last two oxidation reactions steps to complete the biosynthesis of terretonin. Terretonin C is produced via spontaneous decarboxylation of the terretonin precursor. Another shunt product of the terretonin biosynthesis is dihydrofarnesyl-DMOA, derived from epoxyfarnesyl-DMOA through hydrolysis of the epoxide. This is Cytochrome P450 monooxygenase trt6 from Aspergillus terreus (strain NIH 2624 / FGSC A1156).